A 416-amino-acid polypeptide reads, in one-letter code: UDP-N-acetylglucosamine 1-carboxyvinyltransferase (416 aa).

Position 22–23 (lysine 22–asparagine 23) interacts with phosphoenolpyruvate. Residue arginine 92 coordinates UDP-N-acetyl-alpha-D-glucosamine. Cysteine 116 serves as the catalytic Proton donor. 2-(S-cysteinyl)pyruvic acid O-phosphothioketal is present on cysteine 116. Residues arginine 121–glutamine 125, aspartate 304, and isoleucine 326 contribute to the UDP-N-acetyl-alpha-D-glucosamine site.

It belongs to the EPSP synthase family. MurA subfamily.

It is found in the cytoplasm. The catalysed reaction is phosphoenolpyruvate + UDP-N-acetyl-alpha-D-glucosamine = UDP-N-acetyl-3-O-(1-carboxyvinyl)-alpha-D-glucosamine + phosphate. It participates in cell wall biogenesis; peptidoglycan biosynthesis. Its function is as follows. Cell wall formation. Adds enolpyruvyl to UDP-N-acetylglucosamine. The protein is UDP-N-acetylglucosamine 1-carboxyvinyltransferase of Janthinobacterium sp. (strain Marseille) (Minibacterium massiliensis).